Reading from the N-terminus, the 626-residue chain is Glyco-Gag protein (626 aa).

Residues 1–66 are Cytoplasmic-facing; sequence LGDVPGTSGA…SVWNRSRAAR (66 aa). A helical transmembrane segment spans residues 67-86; the sequence is LVCCSIVLCCLCLTVFLYLS. At 87–626 the chain is on the extracellular side; that stretch reads ENMGQAVTTP…PQASLLTLDD (540 aa). N113 carries an N-linked (GlcNAc...) asparagine; by host glycan. Pro residues-rich tracts occupy residues 198-212 and 249-261; these read PPSA…PLST and DPPP…PPSP. Disordered stretches follow at residues 198–306 and 522–626; these read PPSA…FPLR and RETP…TLDD. Composition is skewed to basic and acidic residues over residues 522–554 and 574–607; these read RETP…EKER and RQDR…DCPK. A coiled-coil region spans residues 526–566; that stretch reads EEREERIRRETEEKEERRRAEDVQREKERDRRRHREMSKLL. A CCHC-type zinc finger spans residues 590–607; sequence DQCAYCKEKGHWARDCPK.

Post-translationally, glycosylated by host. In terms of processing, cleaved by host near the middle of the molecule, releasing the c-terminal half containing capsid and nucleoprotein domains op GAG.

Its subcellular location is the host cell membrane. Functionally, plays a role in viral particle release. Presumably acts by facilitating the fission of the virion bud at the cell surface. May prevent the antiviral activity of murine APOBEC3. This is Glyco-Gag protein from Mus musculus (Mouse).